The sequence spans 431 residues: Adenylosuccinate synthetase (431 aa).

Residues 12-18 and 40-42 each bind GTP; these read GDEGKGK and GHT. D13 acts as the Proton acceptor in catalysis. Mg(2+)-binding residues include D13 and G40. Residues 13-16, 38-41, T129, R143, Q224, T239, and R303 contribute to the IMP site; these read DEGK and NAGH. H41 (proton donor) is an active-site residue. 299–305 serves as a coordination point for substrate; that stretch reads VTTGRAR. GTP-binding positions include R305, 331–333, and 413–415; these read KLD and GVG.

Belongs to the adenylosuccinate synthetase family. As to quaternary structure, homodimer. The cofactor is Mg(2+).

It localises to the cytoplasm. It catalyses the reaction IMP + L-aspartate + GTP = N(6)-(1,2-dicarboxyethyl)-AMP + GDP + phosphate + 2 H(+). Its pathway is purine metabolism; AMP biosynthesis via de novo pathway; AMP from IMP: step 1/2. In terms of biological role, plays an important role in the de novo pathway of purine nucleotide biosynthesis. Catalyzes the first committed step in the biosynthesis of AMP from IMP. The chain is Adenylosuccinate synthetase from Mycolicibacterium vanbaalenii (strain DSM 7251 / JCM 13017 / BCRC 16820 / KCTC 9966 / NRRL B-24157 / PYR-1) (Mycobacterium vanbaalenii).